The sequence spans 296 residues: Phosphoribosylaminoimidazole-succinocarboxamide synthase (296 aa).

It belongs to the SAICAR synthetase family.

The catalysed reaction is 5-amino-1-(5-phospho-D-ribosyl)imidazole-4-carboxylate + L-aspartate + ATP = (2S)-2-[5-amino-1-(5-phospho-beta-D-ribosyl)imidazole-4-carboxamido]succinate + ADP + phosphate + 2 H(+). Its pathway is purine metabolism; IMP biosynthesis via de novo pathway; 5-amino-1-(5-phospho-D-ribosyl)imidazole-4-carboxamide from 5-amino-1-(5-phospho-D-ribosyl)imidazole-4-carboxylate: step 1/2. The sequence is that of Phosphoribosylaminoimidazole-succinocarboxamide synthase from Trichlorobacter lovleyi (strain ATCC BAA-1151 / DSM 17278 / SZ) (Geobacter lovleyi).